Reading from the N-terminus, the 232-residue chain is Large ribosomal subunit protein uL1 (232 aa).

The protein belongs to the universal ribosomal protein uL1 family. In terms of assembly, part of the 50S ribosomal subunit.

Its function is as follows. Binds directly to 23S rRNA. The L1 stalk is quite mobile in the ribosome, and is involved in E site tRNA release. In terms of biological role, protein L1 is also a translational repressor protein, it controls the translation of the L11 operon by binding to its mRNA. In Xanthomonas axonopodis pv. citri (strain 306), this protein is Large ribosomal subunit protein uL1.